The chain runs to 150 residues: Large ribosomal subunit protein bL9 (150 aa).

Belongs to the bacterial ribosomal protein bL9 family.

In terms of biological role, binds to the 23S rRNA. The protein is Large ribosomal subunit protein bL9 of Polynucleobacter asymbioticus (strain DSM 18221 / CIP 109841 / QLW-P1DMWA-1) (Polynucleobacter necessarius subsp. asymbioticus).